Here is a 535-residue protein sequence, read N- to C-terminus: Dimethylaniline monooxygenase [N-oxide-forming] 2 (535 aa).

Position 2 is an N-acetylalanine (A2). FAD-binding positions include 9-13 (GAGVS), E32, 40-41 (LW), and 61-62 (NT). NADP(+)-binding positions include 60 to 61 (TN) and 195 to 198 (SASD). A Glycyl lysine isopeptide (Lys-Gly) (interchain with G-Cter in SUMO) cross-link involves residue K492. Residues 510–530 (FPVSFLLKFLGLFALVLAFLF) traverse the membrane as a helical segment.

Belongs to the FMO family. It depends on FAD as a cofactor. Mg(2+) serves as cofactor. Lung.

Its subcellular location is the microsome membrane. It is found in the endoplasmic reticulum membrane. It catalyses the reaction N,N-dimethylaniline + NADPH + O2 + H(+) = N,N-dimethylaniline N-oxide + NADP(+) + H2O. Catalyzes the oxidative metabolism of numerous xenobiotics, including mainly therapeutic drugs and insecticides that contain a soft nucleophile, most commonly nitrogen and sulfur and participates to their bioactivation. Most drug substrates are tertiary amines such as prochlorperazine and trifluoperazine which are N-oxygenated to form the N-oxide, or sulfides such as thiourea and ethionamide, which are S-oxygenated to the sulfoxide. Others include primary alkylamines such as N-dodecylamine and octan-1-amine that are sequentially monooxygenated to oximes through intermediate hydroxylamines and both steps are NADPH- and oxygen-dependent. Also metabolized N-Deacetyl ketoconazole (DAK) to N-hydroxy-DAK and appears to further metabolizes N-hydroxy-DAK to two others metabolites. Also catalyzes S-oxygenation of the thioether-containing organophosphate insecticides, phorate and disulfoton. The protein is Dimethylaniline monooxygenase [N-oxide-forming] 2 of Oryctolagus cuniculus (Rabbit).